Here is a 529-residue protein sequence, read N- to C-terminus: Listeriolysin O (529 aa).

The signal sequence occupies residues 1-24 (MKKIMLVFITLILVSLPIAQQTEA). 4 beta stranded membrane passes run 214–227 (ESQL…AFKA), 234–243 (VNFGAISEGK), 312–321 (STKVKAAFDA), and 329–341 (SGDV…IKNS). Residues 483–493 (ECTGLAWEWWR) carry the Conserved undecapeptide motif. The Cholesterol binding signature appears at 515 to 516 (TL).

It belongs to the cholesterol-dependent cytolysin family. In terms of assembly, homooligomeric pore complex of 35 to 50 subunits; when inserted in the host membrane.

It is found in the secreted. The protein localises to the host membrane. Its subcellular location is the host cell membrane. Its activity is regulated as follows. Activity of listeriolysin O is regulated on multiple levels. It should be high in the phagosome, thereby allowing escape of the bacteria from the phagosomal compartment. Then, once inside the host cytosol, the activity must be controlled to prevent lysis of the host plasma membrane and loss of the intracellular environment. Functionally, a cholesterol-dependent toxin that causes cytolysis by forming pores in cholesterol containing host membranes. After binding to target membranes, the protein undergoes a major conformation change, leading to its insertion in the host membrane and formation of an oligomeric pore complex. Cholesterol is required for binding to host membranes, membrane insertion and pore formation; cholesterol binding is mediated by a Thr-Leu pair in the C-terminus. Acts as a major virulence factor required for the escape of bacteria from phagosomal vacuoles and entry into the host cytosol. Can be reversibly inactivated by oxidation. In Listeria monocytogenes serotype 4b (strain CLIP80459), this protein is Listeriolysin O (hly).